A 163-amino-acid polypeptide reads, in one-letter code: F-box protein At2g35280 (163 aa).

One can recognise an F-box domain in the interval 8–57 (ISRLEALPQDLLREIVAKIGVKSAEDYHNCILSCKELGASANDERVLKTL).

This Arabidopsis thaliana (Mouse-ear cress) protein is F-box protein At2g35280.